We begin with the raw amino-acid sequence, 114 residues long: T cell receptor beta variable 3-1 (114 aa).

Positions 1-21 are cleaved as a signal peptide; it reads MGCRLLCCVVFCLLQAGPLDT. The Ig-like domain maps to 22–114; that stretch reads AVSQTPKYLV…SAVYFCASSQ (93 aa). A disulfide bridge links C42 with C110. A glycan (N-linked (GlcNAc...) asparagine) is linked at N76.

As to quaternary structure, alpha-beta TR is a heterodimer composed of an alpha and beta chain; disulfide-linked. The alpha-beta TR is associated with the transmembrane signaling CD3 coreceptor proteins to form the TR-CD3 (TcR or TCR). The assembly of alpha-beta TR heterodimers with CD3 occurs in the endoplasmic reticulum where a single alpha-beta TR heterodimer associates with one CD3D-CD3E heterodimer, one CD3G-CD3E heterodimer and one CD247 homodimer forming a stable octameric structure. CD3D-CD3E and CD3G-CD3E heterodimers preferentially associate with TR alpha and TR beta chains, respectively. The association of the CD247 homodimer is the last step of TcR assembly in the endoplasmic reticulum and is required for transport to the cell surface.

Its subcellular location is the cell membrane. Its function is as follows. V region of the variable domain of T cell receptor (TR) beta chain that participates in the antigen recognition. Alpha-beta T cell receptors are antigen specific receptors which are essential to the immune response and are present on the cell surface of T lymphocytes. Recognize peptide-major histocompatibility (MH) (pMH) complexes that are displayed by antigen presenting cells (APC), a prerequisite for efficient T cell adaptive immunity against pathogens. Binding of alpha-beta TR to pMH complex initiates TR-CD3 clustering on the cell surface and intracellular activation of LCK that phosphorylates the ITAM motifs of CD3G, CD3D, CD3E and CD247 enabling the recruitment of ZAP70. In turn ZAP70 phosphorylates LAT, which recruits numerous signaling molecules to form the LAT signalosome. The LAT signalosome propagates signal branching to three major signaling pathways, the calcium, the mitogen-activated protein kinase (MAPK) kinase and the nuclear factor NF-kappa-B (NF-kB) pathways, leading to the mobilization of transcription factors that are critical for gene expression and essential for T cell growth and differentiation. The T cell repertoire is generated in the thymus, by V-(D)-J rearrangement. This repertoire is then shaped by intrathymic selection events to generate a peripheral T cell pool of self-MH restricted, non-autoaggressive T cells. Post-thymic interaction of alpha-beta TR with the pMH complexes shapes TR structural and functional avidity. This Homo sapiens (Human) protein is T cell receptor beta variable 3-1.